The primary structure comprises 502 residues: Lysine--tRNA ligase (502 aa).

The Mg(2+) site is built by E409 and E416.

This sequence belongs to the class-II aminoacyl-tRNA synthetase family. Homodimer. It depends on Mg(2+) as a cofactor.

It is found in the cytoplasm. It catalyses the reaction tRNA(Lys) + L-lysine + ATP = L-lysyl-tRNA(Lys) + AMP + diphosphate. The protein is Lysine--tRNA ligase of Prochlorococcus marinus (strain SARG / CCMP1375 / SS120).